The sequence spans 268 residues: Tryptophan synthase alpha chain (268 aa).

Catalysis depends on proton acceptor residues Glu-49 and Asp-60.

It belongs to the TrpA family. Tetramer of two alpha and two beta chains.

The enzyme catalyses (1S,2R)-1-C-(indol-3-yl)glycerol 3-phosphate + L-serine = D-glyceraldehyde 3-phosphate + L-tryptophan + H2O. Its pathway is amino-acid biosynthesis; L-tryptophan biosynthesis; L-tryptophan from chorismate: step 5/5. Functionally, the alpha subunit is responsible for the aldol cleavage of indoleglycerol phosphate to indole and glyceraldehyde 3-phosphate. The chain is Tryptophan synthase alpha chain from Edwardsiella ictaluri (strain 93-146).